The sequence spans 644 residues: Protein cueball (644 aa).

The signal sequence occupies residues 1–26 (MIRIRFGMDVLLVLLLATCLLSPTHG). The Extracellular segment spans residues 27 to 531 (TPLEWDFAVT…VCLTPTVWTS (505 aa)). 2 N-linked (GlcNAc...) asparagine glycosylation sites follow: N82 and N108. 3 LDL-receptor class B repeats span residues 121-166 (TNLF…DVCR), 167-211 (RKLY…DQLS), and 212-257 (DRLF…TNDA). N-linked (GlcNAc...) asparagine glycans are attached at residues N175 and N190. N313 carries an N-linked (GlcNAc...) asparagine glycan. EGF-like domains lie at 398–430 (EIRE…FTGE) and 433–471 (EVSV…ARCE). 5 disulfide bridges follow: C402–C411, C406–C421, C437–C447, C441–C459, and C461–C470. N473 and N508 each carry an N-linked (GlcNAc...) asparagine glycan. A helical membrane pass occupies residues 532–552 (SVIIILVVGIVSSLLLVAVIV). The Cytoplasmic segment spans residues 553–644 (HGIRRLYKPK…LIHNMEDDLY (92 aa)).

This sequence belongs to the cueball family.

The protein localises to the cell membrane. In terms of biological role, has a role in spermatogenesis and oogenesis. This Drosophila yakuba (Fruit fly) protein is Protein cueball.